Consider the following 247-residue polypeptide: UPF0280 protein MMP1236 (247 aa).

It belongs to the UPF0280 family.

This Methanococcus maripaludis (strain DSM 14266 / JCM 13030 / NBRC 101832 / S2 / LL) protein is UPF0280 protein MMP1236.